Here is a 416-residue protein sequence, read N- to C-terminus: S-adenosylmethionine synthase (416 aa).

Histidine 14 provides a ligand contact to ATP. Aspartate 16 lines the Mg(2+) pocket. Glutamate 42 is a K(+) binding site. Residues glutamate 55 and glutamine 98 each coordinate L-methionine. The tract at residues 98 to 108 (QSADINQGVDR) is flexible loop. ATP is bound by residues 164–166 (DAK), 240–241 (KF), aspartate 249, 255–256 (RK), alanine 272, and lysine 276. Aspartate 249 provides a ligand contact to L-methionine. An L-methionine-binding site is contributed by lysine 280.

This sequence belongs to the AdoMet synthase family. In terms of assembly, homotetramer; dimer of dimers. The cofactor is Mg(2+). It depends on K(+) as a cofactor.

The protein localises to the cytoplasm. It carries out the reaction L-methionine + ATP + H2O = S-adenosyl-L-methionine + phosphate + diphosphate. The protein operates within amino-acid biosynthesis; S-adenosyl-L-methionine biosynthesis; S-adenosyl-L-methionine from L-methionine: step 1/1. In terms of biological role, catalyzes the formation of S-adenosylmethionine (AdoMet) from methionine and ATP. The overall synthetic reaction is composed of two sequential steps, AdoMet formation and the subsequent tripolyphosphate hydrolysis which occurs prior to release of AdoMet from the enzyme. The sequence is that of S-adenosylmethionine synthase from Flavobacterium psychrophilum (strain ATCC 49511 / DSM 21280 / CIP 103535 / JIP02/86).